The chain runs to 52 residues: Defensin-like protein 2B (52 aa).

Disulfide bonds link C4–C52, C16–C37, C22–C46, and C26–C48.

As to quaternary structure, forms oligomers in its native state.

Functionally, possesses antifungal activity sensitive to inorganic cations. This chain is Defensin-like protein 2B, found in Sinapis alba (White mustard).